A 446-amino-acid chain; its full sequence is Probable glycine dehydrogenase (decarboxylating) subunit 1 (446 aa).

It belongs to the GcvP family. N-terminal subunit subfamily. The glycine cleavage system is composed of four proteins: P, T, L and H. In this organism, the P 'protein' is a heterodimer of two subunits.

The enzyme catalyses N(6)-[(R)-lipoyl]-L-lysyl-[glycine-cleavage complex H protein] + glycine + H(+) = N(6)-[(R)-S(8)-aminomethyldihydrolipoyl]-L-lysyl-[glycine-cleavage complex H protein] + CO2. The glycine cleavage system catalyzes the degradation of glycine. The P protein binds the alpha-amino group of glycine through its pyridoxal phosphate cofactor; CO(2) is released and the remaining methylamine moiety is then transferred to the lipoamide cofactor of the H protein. The sequence is that of Probable glycine dehydrogenase (decarboxylating) subunit 1 from Thermococcus onnurineus (strain NA1).